Consider the following 404-residue polypeptide: MAAATTSRRGPGAMDDENLTFETSPGVEVISSFDQMGIREDLLRGIYAYGFEKPSAIQQRAVLPIISGRDVIAQAQSGTGKTSMISLSVCQIVDTAVREVQALILSPTRELAAQTERVMLAIGDYINIQVHACIGGKSIGEDIRKLEHGVHVVSGTPGRVCDMIKRRTLRTRAIKLLILDEADEMLGRGFKDQIYDVYRYLPPELQVCLISATLPHEILEMTSKFMTDPVRILVKRDELTLEGIKQFFVAVEKEEWKFDTLCDLYDTLTITQAVIFCNTKRKVDWLTERMRSNNFTVSAMHGDMPQKERDAIMGEFRSGATRVLITTDVWARGLDVQQVSLVINYDLPNNRELYIHRIGRSGRFGRKGVAINFVKKEDIRILRDIEQYYSTQIDEMPMNVADLI.

The interval 1–21 (MAAATTSRRGPGAMDDENLTF) is disordered. The short motif at 31–59 (SSFDQMGIREDLLRGIYAYGFEKPSAIQQ) is the Q motif element. Residues 62–232 (VLPIISGRDV…SKFMTDPVRI (171 aa)) enclose the Helicase ATP-binding domain. 75–82 (AQSGTGKT) serves as a coordination point for ATP. The DEAD box signature appears at 180–183 (DEAD). A Helicase C-terminal domain is found at 243–404 (GIKQFFVAVE…EMPMNVADLI (162 aa)).

This sequence belongs to the DEAD box helicase family. DDX48/FAL1 subfamily. As to quaternary structure, interacts with MAGO1 and Y14B. As to expression, expressed in leaves, flowers and seeds.

The protein resides in the nucleus. It localises to the cytoplasm. It catalyses the reaction ATP + H2O = ADP + phosphate + H(+). Its function is as follows. ATP-dependent RNA helicase. Core component of the splicing-dependent multiprotein exon junction complex (EJC) deposited at splice junctions on mRNAs. The EJC is a dynamic structure consisting of core proteins and several peripheral nuclear and cytoplasmic associated factors that join the complex only transiently either during EJC assembly or during subsequent mRNA metabolism. The EJC marks the position of the exon-exon junction in the mature mRNA for the gene expression machinery and the core components remain bound to spliced mRNAs throughout all stages of mRNA metabolism thereby influencing downstream processes including nuclear mRNA export, subcellular mRNA localization, translation efficiency and nonsense-mediated mRNA decay (NMD). Its RNA-dependent ATPase and RNA-helicase activities are induced by MLN51/CASC3, but abolished in presence of the MAGO-Y14 heterodimer, thereby trapping the ATP-bound EJC core onto spliced mRNA in a stable conformation. The inhibition of ATPase activity by the MAGO-Y14 heterodimer increases the RNA-binding affinity of the EJC. EJC core proteins play essential roles in rice development, growth and reproduction. Regulates the splicing of UDT1 (UNDEVELOPED TAPETUM 1) pre-mRNA transcript. UDT1 is a key regulator in stamen development. The protein is Eukaryotic initiation factor 4A-III homolog B of Oryza sativa subsp. japonica (Rice).